Consider the following 338-residue polypeptide: Anthocyanidin reductase ((2S)-flavan-3-ol-forming) (338 aa).

NADP(+)-binding positions include 18–21 (TGFV), Lys48, 87–90 (VATP), and Tyr168.

It belongs to the NAD(P)-dependent epimerase/dehydratase family. Dihydroflavonol-4-reductase subfamily. In terms of tissue distribution, expressed in seeds, grape skins, flowers and leaves.

The enzyme catalyses a (2S,3R)-flavan-3-ol + 2 NADP(+) = an anthocyanidin with a 3-hydroxy group + 2 NADPH + 2 H(+). The catalysed reaction is a (2S,3S)-flavan-3-ol + 2 NADP(+) = an anthocyanidin with a 3-hydroxy group + 2 NADPH + 2 H(+). It functions in the pathway secondary metabolite biosynthesis; flavonoid biosynthesis. Its activity is regulated as follows. Inhibited at NaCl concentrations higher than 200 mM. Produces the terminal flavan-3-ol monomers required for the formation of proanthocyanidins or condensed tannins in leaves and flowers, as well as in the skin and seeds of developing berries. Behaves as a reductase and as a C-3 epimerase. Catalyzes the double reduction of anthocyanidins, producing a mixture of (2S,3S)- and (2S,3R)-flavan-3-ols. The enzyme catalyzes sequential hydride transfers to C-2 and C-4, respectively and epimerization at C-3 is achieved by tautomerization that occurs between the two hydride transfers. Converts cyanidin, pelargonidin and delphinidin into catechin and epicatechin, afzelechin and epiafzelechin, and gallocatechin and epigallocatechin respectively. The sequence is that of Anthocyanidin reductase ((2S)-flavan-3-ol-forming) from Vitis vinifera (Grape).